Reading from the N-terminus, the 109-residue chain is Spermidine export protein MdtI (109 aa).

Helical transmembrane passes span 6–26 (WWHAAFLFLAVVLDILANILL), 36–56 (WMGILSLIAVLGAFSALAQAV), 63–83 (IAYALWGAFGIIATVAAGWIM), and 88–108 (LNYKGWGGIALLLLGMVMIKM).

Belongs to the drug/metabolite transporter (DMT) superfamily. Small multidrug resistance (SMR) (TC 2.A.7.1) family. MdtI subfamily. Forms a complex with MdtJ.

The protein localises to the cell inner membrane. Functionally, catalyzes the excretion of spermidine. This is Spermidine export protein MdtI from Photorhabdus laumondii subsp. laumondii (strain DSM 15139 / CIP 105565 / TT01) (Photorhabdus luminescens subsp. laumondii).